Consider the following 183-residue polypeptide: Ribosome maturation factor RimM (183 aa).

One can recognise a PRC barrel domain in the interval 103-183 (EEGDYYWKDL…SIEVDWDPGF (81 aa)).

This sequence belongs to the RimM family. In terms of assembly, binds ribosomal protein uS19.

The protein localises to the cytoplasm. Its function is as follows. An accessory protein needed during the final step in the assembly of 30S ribosomal subunit, possibly for assembly of the head region. Essential for efficient processing of 16S rRNA. May be needed both before and after RbfA during the maturation of 16S rRNA. It has affinity for free ribosomal 30S subunits but not for 70S ribosomes. The sequence is that of Ribosome maturation factor RimM from Escherichia coli O157:H7 (strain EC4115 / EHEC).